The primary structure comprises 309 residues: UDP-N-acetylenolpyruvoylglucosamine reductase (309 aa).

In terms of domain architecture, FAD-binding PCMH-type spans 25-188 (RVGGPADWLF…TSVTLQGNRE (164 aa)). Residue Arg-168 is part of the active site. The interval 202-231 (AKRDATQPTKALTAGSTFRNPAGFSSTGQA) is disordered. Residues 207–231 (TQPTKALTAGSTFRNPAGFSSTGQA) are compositionally biased toward polar residues. The active-site Proton donor is Ser-217. The active site involves Glu-299.

Belongs to the MurB family. FAD serves as cofactor.

It is found in the cytoplasm. It catalyses the reaction UDP-N-acetyl-alpha-D-muramate + NADP(+) = UDP-N-acetyl-3-O-(1-carboxyvinyl)-alpha-D-glucosamine + NADPH + H(+). It functions in the pathway cell wall biogenesis; peptidoglycan biosynthesis. Its function is as follows. Cell wall formation. The chain is UDP-N-acetylenolpyruvoylglucosamine reductase from Jannaschia sp. (strain CCS1).